We begin with the raw amino-acid sequence, 777 residues long: Zinc finger FYVE domain-containing protein 1 (777 aa).

The tract at residues 416–777 (MAHSSFFPDE…FNCNKKPGDL (362 aa)) is required for localization in the lipid droplets. FYVE-type zinc fingers lie at residues 598–659 (NSQI…EARN) and 715–775 (DHEI…KKPG). Residues Cys-604, Cys-607, Cys-620, Cys-623, Cys-628, Cys-631, Cys-651, Cys-654, Cys-721, Cys-724, Cys-737, Cys-740, Cys-745, Cys-748, Cys-767, and Cys-770 each contribute to the Zn(2+) site.

In terms of assembly, interacts with RAB18 (in GTP-bound form). Interacts with BSCL2 in a RAB18-dependent manner. Interacts with ZW10. (Microbial infection) Interacts with SARS coronavirus-2/SARS-CoV-2 non-structural protein 6 (nsp6); the interaction is independent of PtdIns3P-binding and leads to endoplasmic reticulum (ER) and double membrane vesicles (DMVs) binding to lipid droplets. In terms of tissue distribution, highly expressed in heart. Also detected in the testis. Expressed in all tissues examined, including, brain, placenta, lung, liver, skeletal muscle, pancreas and kidney. Highly expressed in heart.

The protein resides in the golgi apparatus. The protein localises to the golgi stack. Its subcellular location is the endoplasmic reticulum. It is found in the lipid droplet. It localises to the preautophagosomal structure. The protein resides in the mitochondrion. Functionally, plays a role in the formation of lipid droplets (LDs) which are storage organelles at the center of lipid and energy homeostasis. Regulates the morphology, size and distribution of LDs. Mediates the formation of endoplasmic reticulum-lipid droplets (ER-LD) contacts by forming a complex with RAB18 and ZW10. Binds to phosphatidylinositol 3-phosphate (PtdIns3P) through FYVE-type zinc finger. (Microbial infection) Upon SARS coronavirus-2/SARS-CoV-2 infection, mediates through binding with non-structural protein 6 (nsp6) the replication organelle-lipid droplet association required to sustain viral replication. This Homo sapiens (Human) protein is Zinc finger FYVE domain-containing protein 1 (ZFYVE1).